A 132-amino-acid chain; its full sequence is Ribosome-binding factor A (132 aa).

The protein belongs to the RbfA family. Monomer. Binds 30S ribosomal subunits, but not 50S ribosomal subunits or 70S ribosomes.

It localises to the cytoplasm. One of several proteins that assist in the late maturation steps of the functional core of the 30S ribosomal subunit. Associates with free 30S ribosomal subunits (but not with 30S subunits that are part of 70S ribosomes or polysomes). Required for efficient processing of 16S rRNA. May interact with the 5'-terminal helix region of 16S rRNA. The chain is Ribosome-binding factor A from Pectobacterium carotovorum subsp. carotovorum (strain PC1).